A 480-amino-acid polypeptide reads, in one-letter code: MDKTLKLYNSITRTIDIFTPRKGNEVKMYICGPTVYDSSHIGHARTYVMFDVIRRVLSDYLKYNVRFVMNITDIDDKIIARANETGASMEEVTRKYTEEFFEDMKTLNVRSPSFVTFVTSYVDKIVKFIEKLEANGLAYESRGSVYFDLNSYQQRYSYPLFKSKDGINSEGDENKDKRSPCDFVLWKRSKENEPRYESKWGHGRPGWHIECSVMSSDILGEDLDIHAGGVDLAFPHHENEIAQCQAYFMQEPWVKCFLHTGHLNISGLKMSKSLKNFTTIKEALKTISPRQLRVLFLHHQWNKDMNYEKEHLKFAETIEKKIFNFMSVAESMRKNALAFETLENADREVLRELGNVQEAVHAALLDNVDTPAVMKRIVEMINFTNARIKTISPSTVLVVKDYIKEITDVLGLSEEERQESPGEDLIAQLLSNFRESIREMARRKEPYSKFLEKCDWIRESIKDYGYIIEDNSEGSILRKK.

Position 31 (Cys31) interacts with Zn(2+). Positions 33–43 match the 'HIGH' region motif; it reads PTVYDSSHIGH. Zn(2+) contacts are provided by Cys211, His236, and Glu240. The short motif at 269–273 is the 'KMSKS' region element; that stretch reads KMSKS. Lys272 lines the ATP pocket.

This sequence belongs to the class-I aminoacyl-tRNA synthetase family. Zn(2+) serves as cofactor.

The enzyme catalyses tRNA(Cys) + L-cysteine + ATP = L-cysteinyl-tRNA(Cys) + AMP + diphosphate. The sequence is that of Cysteine--tRNA ligase from Encephalitozoon cuniculi (strain GB-M1) (Microsporidian parasite).